The following is a 623-amino-acid chain: Activator of C kinase protein 1 (623 aa).

Residues 141-230 (KESLGSPAVQ…GSSGGEDKLS (90 aa)) form a disordered region. Polar residues predominate over residues 152 to 161 (ASISSGNRIS). Basic and acidic residues predominate over residues 176 to 193 (SESRILQEKVYRTEEKAP). Glycyl lysine isopeptide (Lys-Gly) (interchain with G-Cter in ubiquitin) cross-links involve residues Lys184 and Lys191. The segment covering 206 to 215 (KINQPPTGSA) has biased composition (polar residues). Sel1-like repeat units follow at residues 318-361 (PPAM…KLNN), 408-444 (SACMYKLGMSHLYGLNMQKTDVLLAIKWFDKAAQKGD), 495-531 (PLAQWKLGNCYEFGDLGLPVVAKKSIYWYSKAAAAQP), and 576-611 (ARTEFALGFYYEKGVGCEVDLDLAKQYYQRAARMGF).

This Saccharomyces cerevisiae (strain ATCC 204508 / S288c) (Baker's yeast) protein is Activator of C kinase protein 1 (ACK1).